The primary structure comprises 206 residues: Ribosomal RNA large subunit methyltransferase E (206 aa).

S-adenosyl-L-methionine contacts are provided by glycine 55, tryptophan 57, aspartate 75, aspartate 91, and aspartate 116. The active-site Proton acceptor is lysine 156.

Belongs to the class I-like SAM-binding methyltransferase superfamily. RNA methyltransferase RlmE family.

The protein localises to the cytoplasm. The enzyme catalyses uridine(2552) in 23S rRNA + S-adenosyl-L-methionine = 2'-O-methyluridine(2552) in 23S rRNA + S-adenosyl-L-homocysteine + H(+). In terms of biological role, specifically methylates the uridine in position 2552 of 23S rRNA at the 2'-O position of the ribose in the fully assembled 50S ribosomal subunit. The sequence is that of Ribosomal RNA large subunit methyltransferase E from Blochmanniella floridana.